Here is a 924-residue protein sequence, read N- to C-terminus: DNA repair and recombination protein RDH54 (924 aa).

Residues 1–10 (MQIPKYENKP) are compositionally biased toward basic and acidic residues. 2 disordered regions span residues 1–21 (MQIP…GSNK) and 155–182 (EALS…KNDG). Over residues 168–178 (TTSTTETVPST) the composition is skewed to low complexity. In terms of domain architecture, Helicase ATP-binding spans 299–487 (LENDSDISGC…FTIIDFINPG (189 aa)). Residue 346–353 (IPLTGLCK) coordinates ATP. Residues 472–475 (NDLN) carry the DEGH box motif. Residue Lys615 forms a Glycyl lysine isopeptide (Lys-Gly) (interchain with G-Cter in ubiquitin) linkage. Positions 631 to 790 (KLRVLMTLLE…DSEMRNKESS (160 aa)) constitute a Helicase C-terminal domain.

Belongs to the SNF2/RAD54 helicase family. Interacts with RAD51 and DMC1.

Its subcellular location is the nucleus. The enzyme catalyses ATP + H2O = ADP + phosphate + H(+). Involved in the recombinational repair of double-strand breaks (DSB) in DNA during mitosis and meiosis. Has DNA dependent ATPase activity. Promotes D-loop (displacement loop) formation with RAD51 recombinase. Modifies the topology of double-stranded DNA during the D-loop reaction to facilitate the invasion of the homologous duplex molecule by the initiating single-stranded DNA substrate. Required for adaptation from G2/M checkpoint arrest induced by a double strand break, by participating in monitoring the extent of single-stranded DNA produced by resection of DNA ends. This role is distinct from its roles in recombination. Promotes colocalization of RAD51 and DMC1 during meiotic recombination. Involved in crossover interference. The polypeptide is DNA repair and recombination protein RDH54 (RDH54) (Saccharomyces cerevisiae (strain AWRI1631) (Baker's yeast)).